Reading from the N-terminus, the 1007-residue chain is Protein vav-1 (1007 aa).

Residues 37–151 enclose the Calponin-homology (CH) domain; the sequence is CDLWIGCARW…TLSFLSHTKE (115 aa). Positions 151-239 are AC; it reads ESLSRGVDPF…ENDLQNTPTL (89 aa). A disordered region spans residues 153–176; it reads LSRGVDPFPDTDNNQEGTSNGSEF. Residues 163–174 show a composition bias toward polar residues; the sequence is TDNNQEGTSNGS. 3 positions are modified to phosphotyrosine: Tyr183, Tyr200, and Tyr217. Positions 240-437 constitute a DH domain; that stretch reads KRNRCIRELY…EDVCNYINEE (198 aa). Residues 470–598 form the PH domain; the sequence is RVNLDGEVKM…WMTALLLSKS (129 aa). The segment at 610–664 adopts a Phorbol-ester/DAG-type zinc-finger fold; sequence NHKVAFHSFRVDVKNPATCDVCDKLMKGLQYQGYKCESCNMSMHKECLGLKKCEA. The SH3 1 domain occupies 688–750; sequence HEGDIVVANS…HLDHVSQSRT (63 aa). The segment at 778 to 817 is disordered; the sequence is LPNKLLSDGSSRSLSGPHGSRSSRNSSSSTINGSMDSVPR. Residues 782–814 show a composition bias toward low complexity; that stretch reads LLSDGSSRSLSGPHGSRSSRNSSSSTINGSMDS. The SH2 domain occupies 831-925; it reads WYMGEMERAK…ALDTCLKNPY (95 aa). Positions 926-991 constitute an SH3 2 domain; it reads SQCKVFKAVH…PLSYVKPYDP (66 aa).

GEF activity is regulated by phosphorylation on tyrosine residues. In terms of tissue distribution, strong expression in the pharynx, proximal gonad, spermatheca, intestine and rectal epithelia.

Functionally, acts as a guanine nucleotide exchange factor (GEF) for Rho GTPase. Has a critical roles in the generation of rhythmic behaviors: feeding, defecation and ovulation by dynamically regulating the concentration of intracellular calcium. Plays a role in male tail tip morphogenesis. In Caenorhabditis elegans, this protein is Protein vav-1.